The primary structure comprises 427 residues: Chitin disaccharide deacetylase (427 aa).

The first 22 residues, 1–22 (MKLNKLAIATLVSAALSQYAFA), serve as a signal peptide directing secretion. The NodB homology domain maps to 28–326 (GTIYLTFDDG…LAKQAGYVFD (299 aa)). 2 consecutive Chitin-binding type-3 domains span residues 333–375 (PNWQ…SSLW) and 382–419 (TNWTQNVSYKQGDVVTYQGLRYLVNVPHVSQADWTPNS).

This sequence belongs to the polysaccharide deacetylase family. Carbohydrate-binding module 12 subfamily.

It catalyses the reaction N,N'-diacetylchitobiose + H2O = N-acetyl-beta-D-glucosaminyl-(1-&gt;4)-D-glucosamine + acetate. The protein operates within glycan degradation; chitin degradation. Functionally, specifically catalyzes the degradation of N,N'-diacetylchitobiose. Key enzyme in the chitin catabolic cascade. The polypeptide is Chitin disaccharide deacetylase (deaA) (Vibrio alginolyticus).